The chain runs to 488 residues: Altronate oxidoreductase (488 aa).

18–29 (VIQFGEGNFLRA) contributes to the NAD(+) binding site.

It belongs to the mannitol dehydrogenase family. UxaB subfamily.

It carries out the reaction D-altronate + NAD(+) = keto-D-tagaturonate + NADH + H(+). Its pathway is carbohydrate metabolism; pentose and glucuronate interconversion. The chain is Altronate oxidoreductase from Pectobacterium carotovorum subsp. carotovorum (strain PC1).